Here is a 78-residue protein sequence, read N- to C-terminus: MKTLLLTLVVLTIVCLDLGYTMTCYNQQLSQPQTTTTCAESFCYKKTWSGTIIERGCGCPPMKPPIRLKCCRTEKCNN.

A signal peptide spans 1 to 21; that stretch reads MKTLLLTLVVLTIVCLDLGYT. Disulfide bonds link Cys-24-Cys-43, Cys-38-Cys-57, Cys-59-Cys-70, and Cys-71-Cys-76.

This sequence belongs to the three-finger toxin family. Short-chain subfamily. Type I alpha-neurotoxin sub-subfamily. As to expression, expressed by the venom gland.

The protein localises to the secreted. Functionally, binds to muscle nicotinic acetylcholine receptor (nAChR) and inhibit acetylcholine from binding to the receptor, thereby impairing neuromuscular transmission. This is Short neurotoxin 342 from Drysdalia coronoides (White-lipped snake).